We begin with the raw amino-acid sequence, 194 residues long: Coiled-coil domain-containing protein 184 (194 aa).

The stretch at 39–68 (GMKELMEHLKAQLQALFEDVRAMRGALDEQ) forms a coiled coil. A disordered region spans residues 101–176 (GLGVVGGKGS…LLGGDGPLVE (76 aa)). Over residues 135–145 (PEDEEEEEEEK) the composition is skewed to acidic residues.

This chain is Coiled-coil domain-containing protein 184 (CCDC184), found in Homo sapiens (Human).